The following is a 203-amino-acid chain: tRNA (cytidine(56)-2'-O)-methyltransferase (203 aa).

S-adenosyl-L-methionine is bound by residues Leu80, 109–113 (GAEKV), and 127–134 (IGNQPHSE). The segment at 178 to 203 (AEQDKAEGKATPGKNWENSGFTGDNP) is disordered. Polar residues predominate over residues 193 to 203 (WENSGFTGDNP).

This sequence belongs to the aTrm56 family. In terms of assembly, homodimer.

It is found in the cytoplasm. It carries out the reaction cytidine(56) in tRNA + S-adenosyl-L-methionine = 2'-O-methylcytidine(56) in tRNA + S-adenosyl-L-homocysteine + H(+). Specifically catalyzes the AdoMet-dependent 2'-O-ribose methylation of cytidine at position 56 in tRNAs. In Pyrococcus horikoshii (strain ATCC 700860 / DSM 12428 / JCM 9974 / NBRC 100139 / OT-3), this protein is tRNA (cytidine(56)-2'-O)-methyltransferase.